Consider the following 150-residue polypeptide: 3-hydroxyacyl-[acyl-carrier-protein] dehydratase FabZ (150 aa).

Residue His-51 is part of the active site.

This sequence belongs to the thioester dehydratase family. FabZ subfamily.

The protein resides in the cytoplasm. The catalysed reaction is a (3R)-hydroxyacyl-[ACP] = a (2E)-enoyl-[ACP] + H2O. In terms of biological role, involved in unsaturated fatty acids biosynthesis. Catalyzes the dehydration of short chain beta-hydroxyacyl-ACPs and long chain saturated and unsaturated beta-hydroxyacyl-ACPs. The chain is 3-hydroxyacyl-[acyl-carrier-protein] dehydratase FabZ from Legionella pneumophila subsp. pneumophila (strain Philadelphia 1 / ATCC 33152 / DSM 7513).